Consider the following 740-residue polypeptide: Protein SIEVE ELEMENT OCCLUSION B (740 aa).

The segment covering 1–23 (MESLIKSQHAQQLAGHKNTTGKT) has biased composition (polar residues). Residues 1–27 (MESLIKSQHAQQLAGHKNTTGKTPSME) are disordered.

As to quaternary structure, can form homodimer. In terms of tissue distribution, expressed in phloem sieve elements.

Its function is as follows. Scaffold protein required to form the phloem filament matrix in sieve elements. The protein is Protein SIEVE ELEMENT OCCLUSION B of Arabidopsis thaliana (Mouse-ear cress).